The sequence spans 749 residues: Cytosolic phospholipase A2 (749 aa).

The region spanning 1 to 124 (MASIDPYQHI…GEKKQVPFTF (124 aa)) is the C2 domain. Residues 1-178 (MASIDPYQHI…LRKLLGPEKT (178 aa)) are phospholipid binding. Residues Asp-40, Thr-41, Asp-43, Asn-65, Asp-93, Ala-94, and Asn-95 each coordinate Ca(2+). One can recognise a PLA2c domain in the interval 138–740 (VCSSTDLRFS…NDVESRKLHH (603 aa)). The Nucleophile role is filled by Ser-229. The segment at 428 to 452 (HILGNDSSDSDDEMQEPKGTENAKA) is disordered. Basic and acidic residues predominate over residues 442 to 452 (QEPKGTENAKA). The active-site Proton acceptor is Asp-549. Residues 729–749 (SLNDVESRKLHHKDSQSKFQM) form a disordered region. The span at 733–749 (VESRKLHHKDSQSKFQM) shows a compositional bias: basic and acidic residues.

The protein localises to the cytoplasm. The protein resides in the cytoplasmic vesicle. It carries out the reaction a 1,2-diacyl-sn-glycero-3-phosphocholine + H2O = a 1-acyl-sn-glycero-3-phosphocholine + a fatty acid + H(+). It catalyses the reaction a 1-acyl-sn-glycero-3-phosphocholine + H2O = sn-glycerol 3-phosphocholine + a fatty acid + H(+). Its activity is regulated as follows. Stimulated by agonists such as ATP, EGF, thrombin and bradykinin as well as by cytosolic Ca(2+). Its function is as follows. Selectively hydrolyzes arachidonyl phospholipids in the sn-2 position releasing arachidonic acid. Together with its lysophospholipid activity, it is implicated in the initiation of the inflammatory response. The sequence is that of Cytosolic phospholipase A2 (pla2g4a) from Xenopus laevis (African clawed frog).